The sequence spans 354 residues: Protein RecA (354 aa).

Residue 67–74 coordinates ATP; the sequence is GPESSGKT.

The protein belongs to the RecA family.

The protein resides in the cytoplasm. In terms of biological role, can catalyze the hydrolysis of ATP in the presence of single-stranded DNA, the ATP-dependent uptake of single-stranded DNA by duplex DNA, and the ATP-dependent hybridization of homologous single-stranded DNAs. It interacts with LexA causing its activation and leading to its autocatalytic cleavage. The protein is Protein RecA of Chlamydia muridarum (strain MoPn / Nigg).